The primary structure comprises 140 residues: Coiled-coil domain-containing protein 126 (140 aa).

An N-terminal signal peptide occupies residues 1–26 (MFFTISRKNMSQKLSLLLLVFGLIWG). 2 N-linked (GlcNAc...) asparagine glycosylation sites follow: Asn-110 and Asn-134. The disordered stretch occupies residues 120–140 (TSGNLVPVTTNKRTNVSGSIR).

The protein localises to the secreted. The polypeptide is Coiled-coil domain-containing protein 126 (CCDC126) (Homo sapiens (Human)).